The chain runs to 61 residues: Small ribosomal subunit protein uS14B (61 aa).

C24, C27, C40, and C43 together coordinate Zn(2+).

This sequence belongs to the universal ribosomal protein uS14 family. Zinc-binding uS14 subfamily. Part of the 30S ribosomal subunit. Contacts proteins S3 and S10. The cofactor is Zn(2+).

Functionally, binds 16S rRNA, required for the assembly of 30S particles and may also be responsible for determining the conformation of the 16S rRNA at the A site. The sequence is that of Small ribosomal subunit protein uS14B from Staphylococcus saprophyticus subsp. saprophyticus (strain ATCC 15305 / DSM 20229 / NCIMB 8711 / NCTC 7292 / S-41).